A 322-amino-acid polypeptide reads, in one-letter code: MTASPSKLAQLRDLSVVVADTGDYDAIKRLKPVDCTTNPTLVKKALDLPVYADLIERELAWGRAHGGEDRNSTINEVADRLTVGVGTMLSELVPGRVSTEVDADLAHDTQATIAKARKFIAMYAERGVSKDKILIKIAATWEGIEAARQLQQEGIDCNLTLIFNRSQALACAEAGVFLISPFVGRILDFFVAKGQTPASIDEDPGVVFVRGVYDEFKRRGSSTVVMGASFRSTAQIEALAGCDRLTISPDLLEKLDADHGDLPRKLSPLNADNAAITPINSDSFATDLAADDMATEKLASGIDTFAKDLEALRKTIADKLAG.

The active-site Schiff-base intermediate with substrate is K136.

The protein belongs to the transaldolase family. Type 1 subfamily. As to quaternary structure, homodimer.

It is found in the cytoplasm. The enzyme catalyses D-sedoheptulose 7-phosphate + D-glyceraldehyde 3-phosphate = D-erythrose 4-phosphate + beta-D-fructose 6-phosphate. It participates in carbohydrate degradation; pentose phosphate pathway; D-glyceraldehyde 3-phosphate and beta-D-fructose 6-phosphate from D-ribose 5-phosphate and D-xylulose 5-phosphate (non-oxidative stage): step 2/3. In terms of biological role, transaldolase is important for the balance of metabolites in the pentose-phosphate pathway. This chain is Transaldolase, found in Xanthomonas campestris pv. campestris (strain B100).